The chain runs to 815 residues: Probable E3 ubiquitin-protein ligase hulA (815 aa).

The C2 domain occupies 1–112 (MGSNLPSQPN…EMGGDEMLTR (112 aa)). Disordered regions lie at residues 134–237 (NLST…GWER) and 253–353 (RTTT…YFVD). Low complexity-rich tracts occupy residues 165–185 (ASAA…SNPS) and 202–212 (APGAAAGATPT). 2 stretches are compositionally biased toward polar residues: residues 213–226 (NTQG…SFED) and 253–270 (RTTT…QTQR). The region spanning 229–262 (GRLPAGWERREDNLGRTYYVDHNTRTTTWTRPSS) is the WW 1 domain. Positions 279-294 (LERRAHQSRMLPEDRT) are enriched in basic and acidic residues. A compositionally biased stretch (polar residues) spans 295–308 (GANSPNLPETSQQA). A compositionally biased stretch (low complexity) spans 324-333 (ATGATTAGTG). WW domains lie at 333 to 366 (GELP…DPRR) and 393 to 426 (GPLP…DPRL). The region spanning 482–815 (SASDLKKRLM…VEETLGFGQE (334 aa)) is the HECT domain. The active-site Glycyl thioester intermediate is the Cys783.

Belongs to the RSP5/NEDD4 family. In terms of assembly, interacts with creD.

Its subcellular location is the cytoplasm. It carries out the reaction S-ubiquitinyl-[E2 ubiquitin-conjugating enzyme]-L-cysteine + [acceptor protein]-L-lysine = [E2 ubiquitin-conjugating enzyme]-L-cysteine + N(6)-ubiquitinyl-[acceptor protein]-L-lysine.. Its pathway is protein modification; protein ubiquitination. Functionally, E3 ubiquitin-protein ligase which accepts ubiquitin from an E2 ubiquitin-conjugating enzyme in the form of a thioester and then directly transfers the ubiquitin to targeted substrates. Probably involved in the regulatory network controlling carbon source utilization. The polypeptide is Probable E3 ubiquitin-protein ligase hulA (hulA) (Aspergillus clavatus (strain ATCC 1007 / CBS 513.65 / DSM 816 / NCTC 3887 / NRRL 1 / QM 1276 / 107)).